A 216-amino-acid polypeptide reads, in one-letter code: Heart- and neural crest derivatives-expressed protein 2 (216 aa).

The segment at 74–115 (MDHSHYGGVPPGSGPPGLGGPRPVKRRGTANRKERRRTQSIN) is disordered. Positions 82–93 (VPPGSGPPGLGG) are enriched in gly residues. Positions 96 to 111 (PVKRRGTANRKERRRT) are enriched in basic residues. The bHLH domain maps to 98–150 (KRRGTANRKERRRTQSINSAFAELRECIPNVPADTKLSKIKTLRLATSYIAYL).

As to quaternary structure, efficient DNA binding requires dimerization with another bHLH protein.

The protein localises to the nucleus. Its function is as follows. Essential for cardiac morphogenesis. Binds DNA on E-box consensus sequence 5'-CANNTG-3'. Plays an important role in limb development, particularly in the establishment of anterior-posterior polarization of the limb bud. The polypeptide is Heart- and neural crest derivatives-expressed protein 2 (HAND2) (Gallus gallus (Chicken)).